A 110-amino-acid polypeptide reads, in one-letter code: Chelonianin (110 aa).

A Pyrrolidone carboxylic acid modification is found at Gln-1. In terms of domain architecture, BPTI/Kunitz inhibitor spans 8–58 (CRLPPEQGPCKGRIPRYFYNPASRMCESFIYGGCKGNKNNFKTKAECVRAC). 7 disulfide bridges follow: Cys-8/Cys-58, Cys-17/Cys-41, Cys-33/Cys-54, Cys-67/Cys-92, Cys-76/Cys-97, Cys-80/Cys-93, and Cys-86/Cys-101. One can recognise a WAP domain in the interval 60-105 (PPERPGVCPKTSGPGICLHGCDSDSDCKEGQKCCFDGCGYICLTVA).

In terms of biological role, the first domain inhibits trypsin; the second one inhibitis subtilisin. This is Chelonianin from Caretta caretta (Loggerhead sea turtle).